We begin with the raw amino-acid sequence, 206 residues long: LexA repressor (206 aa).

A DNA-binding region (H-T-H motif) is located at residues 28–48 (VREICAAVGLSSTSTVHGHLT). Residues S127 and K165 each act as for autocatalytic cleavage activity in the active site.

The protein belongs to the peptidase S24 family. In terms of assembly, homodimer.

The catalysed reaction is Hydrolysis of Ala-|-Gly bond in repressor LexA.. In terms of biological role, represses a number of genes involved in the response to DNA damage (SOS response), including recA and lexA. In the presence of single-stranded DNA, RecA interacts with LexA causing an autocatalytic cleavage which disrupts the DNA-binding part of LexA, leading to derepression of the SOS regulon and eventually DNA repair. The chain is LexA repressor from Lactobacillus delbrueckii subsp. bulgaricus (strain ATCC 11842 / DSM 20081 / BCRC 10696 / JCM 1002 / NBRC 13953 / NCIMB 11778 / NCTC 12712 / WDCM 00102 / Lb 14).